We begin with the raw amino-acid sequence, 332 residues long: Leucine carboxyl methyltransferase 1 (332 aa).

S-adenosyl-L-methionine-binding positions include Arg-71, Gly-96, Asp-120, 169 to 170, and Glu-196; that span reads DL.

The protein belongs to the methyltransferase superfamily. LCMT family.

It carries out the reaction [phosphatase 2A protein]-C-terminal L-leucine + S-adenosyl-L-methionine = [phosphatase 2A protein]-C-terminal L-leucine methyl ester + S-adenosyl-L-homocysteine. Functionally, methylates the carboxyl group of the C-terminal leucine residue of protein phosphatase 2A catalytic subunits to form alpha-leucine ester residues. This Rattus norvegicus (Rat) protein is Leucine carboxyl methyltransferase 1 (Lcmt1).